The chain runs to 254 residues: Proteasome subunit alpha (254 aa).

The interval 232-254 (PEVDSSESSNEAEAGAEKGSGES) is disordered.

Belongs to the peptidase T1A family. In terms of assembly, the 20S proteasome core is composed of 14 alpha and 14 beta subunits that assemble into four stacked heptameric rings, resulting in a barrel-shaped structure. The two inner rings, each composed of seven catalytic beta subunits, are sandwiched by two outer rings, each composed of seven alpha subunits. The catalytic chamber with the active sites is on the inside of the barrel. Has a gated structure, the ends of the cylinder being occluded by the N-termini of the alpha-subunits. Is capped by the proteasome-associated ATPase, ARC.

The protein localises to the cytoplasm. The protein operates within protein degradation; proteasomal Pup-dependent pathway. With respect to regulation, the formation of the proteasomal ATPase ARC-20S proteasome complex, likely via the docking of the C-termini of ARC into the intersubunit pockets in the alpha-rings, may trigger opening of the gate for substrate entry. Interconversion between the open-gate and close-gate conformations leads to a dynamic regulation of the 20S proteasome proteolysis activity. Its function is as follows. Component of the proteasome core, a large protease complex with broad specificity involved in protein degradation. The protein is Proteasome subunit alpha of Mycolicibacterium vanbaalenii (strain DSM 7251 / JCM 13017 / BCRC 16820 / KCTC 9966 / NRRL B-24157 / PYR-1) (Mycobacterium vanbaalenii).